A 111-amino-acid polypeptide reads, in one-letter code: Large ribosomal subunit protein uL22 (111 aa).

The protein belongs to the universal ribosomal protein uL22 family. Part of the 50S ribosomal subunit.

This protein binds specifically to 23S rRNA; its binding is stimulated by other ribosomal proteins, e.g. L4, L17, and L20. It is important during the early stages of 50S assembly. It makes multiple contacts with different domains of the 23S rRNA in the assembled 50S subunit and ribosome. Its function is as follows. The globular domain of the protein is located near the polypeptide exit tunnel on the outside of the subunit, while an extended beta-hairpin is found that lines the wall of the exit tunnel in the center of the 70S ribosome. The sequence is that of Large ribosomal subunit protein uL22 from Xylella fastidiosa (strain M23).